Reading from the N-terminus, the 343-residue chain is Phenylalanine--tRNA ligase alpha subunit (343 aa).

A Mg(2+)-binding site is contributed by Glu-256.

Belongs to the class-II aminoacyl-tRNA synthetase family. Phe-tRNA synthetase alpha subunit type 1 subfamily. As to quaternary structure, tetramer of two alpha and two beta subunits. The cofactor is Mg(2+).

It localises to the cytoplasm. It carries out the reaction tRNA(Phe) + L-phenylalanine + ATP = L-phenylalanyl-tRNA(Phe) + AMP + diphosphate + H(+). This is Phenylalanine--tRNA ligase alpha subunit from Aster yellows witches'-broom phytoplasma (strain AYWB).